Reading from the N-terminus, the 309-residue chain is MITFLPIIFSSLVVVTFVIGNFANGFIALVNSIEWFKRQKISFADQILTALAVSRVGLLWVLLLNWYSTVLNPAFNSVEVRTTAYNIWAVINHFSNWLATSLSIFYLLKIANFSNFIFLHLKRRVKSVILVMLLGPLLFLACHLFVINMNEIVRTKEFEGNMTWKIKLKSAMYFSNMTVTMVANLVPFTLTLLSFLLLICSLCKHLKKMQLHGKGSQDPSTKVHIKVLQTVISFLLLCAIYFLSIMISVWSFGSLKNKPVFMFCKAMRFSYPSIHPFILIWGNKKLKQTFLSVFWQMRYWVKGEKTSSP.

Position 1 (Met-1) is a topological domain, extracellular. The chain crosses the membrane as a helical span at residues 2-22 (ITFLPIIFSSLVVVTFVIGNF). The Cytoplasmic portion of the chain corresponds to 23–46 (ANGFIALVNSIEWFKRQKISFADQ). The helical transmembrane segment at 47-67 (ILTALAVSRVGLLWVLLLNWY) threads the bilayer. Topologically, residues 68-86 (STVLNPAFNSVEVRTTAYN) are extracellular. The chain crosses the membrane as a helical span at residues 87–107 (IWAVINHFSNWLATSLSIFYL). Topologically, residues 108–126 (LKIANFSNFIFLHLKRRVK) are cytoplasmic. Residues 127 to 147 (SVILVMLLGPLLFLACHLFVI) form a helical membrane-spanning segment. Residues 148–178 (NMNEIVRTKEFEGNMTWKIKLKSAMYFSNMT) are Extracellular-facing. Asn-161 and Asn-176 each carry an N-linked (GlcNAc...) asparagine glycan. A helical transmembrane segment spans residues 179 to 199 (VTMVANLVPFTLTLLSFLLLI). The Cytoplasmic portion of the chain corresponds to 200–229 (CSLCKHLKKMQLHGKGSQDPSTKVHIKVLQ). The chain crosses the membrane as a helical span at residues 230-250 (TVISFLLLCAIYFLSIMISVW). Topologically, residues 251-259 (SFGSLKNKP) are extracellular. The helical transmembrane segment at 260–280 (VFMFCKAMRFSYPSIHPFILI) threads the bilayer. Residues 281–309 (WGNKKLKQTFLSVFWQMRYWVKGEKTSSP) lie on the Cytoplasmic side of the membrane.

The protein belongs to the G-protein coupled receptor T2R family.

The protein resides in the membrane. It is found in the cell projection. Its subcellular location is the cilium membrane. Its function is as follows. Gustducin-coupled receptor immplicated in the perception of bitter compounds in the oral cavity and the gastrointestinal tract. Signals through PLCB2 and the calcium-regulated cation channel TRPM5. Activated by the sulfonyl amide sweeteners saccharin and acesulfame K. In airway epithelial cells, binding of bitter compounds increases the intracellular calcium ion concentration and stimulates ciliary beat frequency. May act as chemosensory receptors in airway epithelial cells to detect and eliminate potential noxious agents from the airways. The protein is Taste receptor type 2 member 43 (TAS2R43) of Pan troglodytes (Chimpanzee).